We begin with the raw amino-acid sequence, 186 residues long: Dirigent protein 4 (186 aa).

Residues 1 to 20 form the signal peptide; sequence MGKNLGLVVSFYLCITFALG. N-linked (GlcNAc...) asparagine glycans are attached at residues Asn67, Asn126, Asn169, and Asn180.

Belongs to the plant dirigent protein family. As to quaternary structure, homodimer.

The protein localises to the secreted. It is found in the extracellular space. Its subcellular location is the apoplast. Dirigent proteins impart stereoselectivity on the phenoxy radical-coupling reaction, yielding optically active lignans from two molecules of coniferyl alcohol in the biosynthesis of lignans, flavonolignans, and alkaloids and thus plays a central role in plant secondary metabolism. This Arabidopsis thaliana (Mouse-ear cress) protein is Dirigent protein 4 (DIR4).